We begin with the raw amino-acid sequence, 952 residues long: Ubiquitin carboxyl-terminal hydrolase 15 (952 aa).

Position 2 is an N-acetylalanine (Ala-2). The interval 2 to 223 (AEGGAADLDT…KNEDGTWPRG (222 aa)) is mediates interaction with SART3. The region spanning 7 to 118 (ADLDTQRSDI…GQEPIARKVV (112 aa)) is the DUSP domain. Residues 260-904 (CGLSNLGNTC…AAYVLFYQRQ (645 aa)) form the USP domain. Catalysis depends on Cys-269, which acts as the Nucleophile. Residue Thr-573 is modified to Phosphothreonine. The disordered stretch occupies residues 597 to 665 (ETDGPLRCCE…GGDNDSENGL (69 aa)). Acidic residues predominate over residues 627-644 (METDEPDDESSQDQELPS). His-862 acts as the Proton acceptor in catalysis. Residues 923-952 (SAATGVPLESDEDSNDNDNDLENENCMHTN) are disordered. Residues 931–945 (ESDEDSNDNDNDLEN) are compositionally biased toward acidic residues. Phosphoserine occurs at positions 932 and 936.

Belongs to the peptidase C19 family. In terms of assembly, a homodimer structure has been reported; however it is unclear whether the protein form a homodimer in vivo. Identified in a complex with the COP9 signalosome complex (CSN). Interacts with SMAD1, SMAD2 and SMAD3; the interaction is direct. Forms a complex with SMURF2 and SMAD7. Interacts with TGFBR1. Interacts with SART3; the interaction is direct. May interact with RNF20 and RNF40. May interact with PRKN. Interacts with INCA1. Phosphorylated. Phosphorylation protects against ubiquitination and subsequent degradation by the proteasome. Post-translationally, ubiquitinated, leading to degradation by the proteasome. Highly expressed in testis and spleen, and at lower level in other tissues.

It localises to the cytoplasm. Its subcellular location is the nucleus. It is found in the mitochondrion. The enzyme catalyses Thiol-dependent hydrolysis of ester, thioester, amide, peptide and isopeptide bonds formed by the C-terminal Gly of ubiquitin (a 76-residue protein attached to proteins as an intracellular targeting signal).. Hydrolase that removes conjugated ubiquitin from target proteins and regulates various pathways such as the TGF-beta receptor signaling, NF-kappa-B and RNF41/NRDP1-PRKN pathways. Acts as a key regulator of TGF-beta receptor signaling pathway, but the precise mechanism is still unclear: according to a report, acts by promoting deubiquitination of monoubiquitinated R-SMADs (SMAD1, SMAD2 and/or SMAD3), thereby alleviating inhibition of R-SMADs and promoting activation of TGF-beta target genes. According to another reports, regulates the TGF-beta receptor signaling pathway by mediating deubiquitination and stabilization of TGFBR1, leading to an enhanced TGF-beta signal. Able to mediate deubiquitination of monoubiquitinated substrates, 'Lys-27'-, 'Lys-48'- and 'Lys-63'-linked polyubiquitin chains. May also regulate gene expression and/or DNA repair through the deubiquitination of histone H2B. Acts as an inhibitor of mitophagy by counteracting the action of parkin (PRKN): hydrolyzes cleavage of 'Lys-48'- and 'Lys-63'-linked polyubiquitin chains attached by parkin on target proteins such as MFN2, thereby reducing parkin's ability to drive mitophagy. Acts as an associated component of COP9 signalosome complex (CSN) and regulates different pathways via this association: regulates NF-kappa-B by mediating deubiquitination of NFKBIA and deubiquitinates substrates bound to VCP. Involved in endosome organization by mediating deubiquitination of SQSTM1: ubiquitinated SQSTM1 forms a molecular bridge that restrains cognate vesicles in the perinuclear region and its deubiquitination releases target vesicles for fast transport into the cell periphery. Acts as a negative regulator of antifungal immunity by mediating 'Lys-27'-linked deubiquitination of CARD9, thereby inactivating CARD9. In Rattus norvegicus (Rat), this protein is Ubiquitin carboxyl-terminal hydrolase 15 (Usp15).